The following is a 119-amino-acid chain: Ethylene-responsive proteinase inhibitor 1 (119 aa).

The first 27 residues, 1 to 27, serve as a signal peptide directing secretion; sequence MEANKSMVKLVAFLIILVSSCFQSLTA. A propeptide spanning residues 28–48 is cleaved from the precursor; sequence QDLEIEVSDGLNVLQVHDVSQ.

It belongs to the protease inhibitor I13 (potato type I serine protease inhibitor) family.

It is found in the secreted. The chain is Ethylene-responsive proteinase inhibitor 1 from Solanum lycopersicum (Tomato).